We begin with the raw amino-acid sequence, 169 residues long: MIIYKDIVSGDEMFSDAYKMKVLDDYFYELEGKITTEKGGIDESAIGGNASAEDAVEGLEESGTTGCNIVIAQRLQETQFTKAQYKVYIKDYSKKVLEYLTKNKPERVDGFKAASAAGMKRVMGNFKNWQFFTGEKMDQDGMVALMDYREDGKTPYMLFFKDGLEEEKF.

The TCTP domain maps to 1–169; that stretch reads MIIYKDIVSG…FKDGLEEEKF (169 aa).

This sequence belongs to the TCTP family.

Its subcellular location is the cytoplasm. In terms of biological role, involved in calcium binding and microtubule stabilization. The chain is Translationally-controlled tumor protein homolog from Branchiostoma belcheri (Amphioxus).